The primary structure comprises 431 residues: UDP-N-acetylglucosamine 1-carboxyvinyltransferase (431 aa).

22–23 (KN) lines the phosphoenolpyruvate pocket. Arginine 102 contacts UDP-N-acetyl-alpha-D-glucosamine. Residue cysteine 126 is the Proton donor of the active site. Residue cysteine 126 is modified to 2-(S-cysteinyl)pyruvic acid O-phosphothioketal. Aspartate 318 and isoleucine 340 together coordinate UDP-N-acetyl-alpha-D-glucosamine.

Belongs to the EPSP synthase family. MurA subfamily.

The protein resides in the cytoplasm. The catalysed reaction is phosphoenolpyruvate + UDP-N-acetyl-alpha-D-glucosamine = UDP-N-acetyl-3-O-(1-carboxyvinyl)-alpha-D-glucosamine + phosphate. It functions in the pathway cell wall biogenesis; peptidoglycan biosynthesis. Cell wall formation. Adds enolpyruvyl to UDP-N-acetylglucosamine. The polypeptide is UDP-N-acetylglucosamine 1-carboxyvinyltransferase (Bartonella quintana (strain Toulouse) (Rochalimaea quintana)).